We begin with the raw amino-acid sequence, 360 residues long: Mannose-1-phosphate guanylyltransferase catalytic subunit beta (360 aa).

The interval 2–222 (KALILVGGYG…QGFWMDIGQP (221 aa)) is substrate-binding domain. Residue Asp-110 participates in GDP-alpha-D-mannose binding. Asp-110 is a Mg(2+) binding site. Lys-162 is an active-site residue. Position 218 (Asp-218) interacts with GDP-alpha-D-mannose. Residue Asp-218 participates in Mg(2+) binding. The segment at 245 to 360 (CSGPGIVGNV…ESVPEPRIIM (116 aa)) is hexapeptide repeat domain.

This sequence belongs to the transferase hexapeptide repeat family. As to quaternary structure, component of the GMPPA-GMPPB mannose-1-phosphate guanylyltransferase complex composed of 4 GMPPA subunits and 8 GMPPB subunits; the complex is organized into three layers, a central layer made up of 2 GMPPA dimers sandwiched between two layers each made up of 2 GMPPB dimers. GMPPB catalytic activity is reduced when part of the complex and binding of GDP-alpha-D-Mannose by GMPPA induces allosteric feedback inhibition of GMPPB. Mg(2+) serves as cofactor. In terms of tissue distribution, ubiquitously expressed, including in brain and skeletal muscle. As to expression, weakly expressed with highest expression in skeletal muscle, brain and gonads.

The protein localises to the cytoplasm. It carries out the reaction alpha-D-mannose 1-phosphate + GTP + H(+) = GDP-alpha-D-mannose + diphosphate. It participates in nucleotide-sugar biosynthesis; GDP-alpha-D-mannose biosynthesis; GDP-alpha-D-mannose from alpha-D-mannose 1-phosphate (GTP route): step 1/1. Enzyme activity is reduced by incorporation into the GMPPA-GMPPB mannose-1-phosphate guanylyltransferase complex. Allosterically inhibited, when part of the GMPPA-GMPPB complex, by GDP-alpha-D-mannose binding to GMPPA. In terms of biological role, catalytic subunit of the GMPPA-GMPPB mannose-1-phosphate guanylyltransferase complex. Catalyzes the formation of GDP-mannose, an essential precursor of glycan moieties of glycoproteins and glycolipids. Can catalyze the reverse reaction in vitro. Together with GMPPA regulates GDP-alpha-D-mannose levels. In Homo sapiens (Human), this protein is Mannose-1-phosphate guanylyltransferase catalytic subunit beta.